The following is a 318-amino-acid chain: UDP-N-acetylenolpyruvoylglucosamine reductase (318 aa).

One can recognise an FAD-binding PCMH-type domain in the interval 38–204 (IGGVCPVIVE…LGIEILLKEG (167 aa)). The active site involves R182. The span at 212–229 (SLKDKRDRRNSSQPENKK) shows a compositional bias: basic and acidic residues. The segment at 212 to 232 (SLKDKRDRRNSSQPENKKSAG) is disordered. Residue S233 is the Proton donor of the active site. Residue E310 is part of the active site.

This sequence belongs to the MurB family. FAD is required as a cofactor.

It localises to the cytoplasm. It catalyses the reaction UDP-N-acetyl-alpha-D-muramate + NADP(+) = UDP-N-acetyl-3-O-(1-carboxyvinyl)-alpha-D-glucosamine + NADPH + H(+). It functions in the pathway cell wall biogenesis; peptidoglycan biosynthesis. Functionally, cell wall formation. The sequence is that of UDP-N-acetylenolpyruvoylglucosamine reductase from Leptospira interrogans serogroup Icterohaemorrhagiae serovar copenhageni (strain Fiocruz L1-130).